The primary structure comprises 149 residues: UPF0178 protein NT01CX_0440 (149 aa).

Belongs to the UPF0178 family.

In Clostridium novyi (strain NT), this protein is UPF0178 protein NT01CX_0440.